Here is a 283-residue protein sequence, read N- to C-terminus: Interferon alpha-inducible protein 27-like protein 2B (283 aa).

A mitochondrion-targeting transit peptide spans 1-90; it reads MKRKFVGAAI…AVGTATGARA (90 aa). Residues 90–120 form a disordered region; that stretch reads AEGSMGASREQESGPQDPPQELQEPQEPPSC. 3 helical membrane passes run 130–150, 176–196, and 202–222; these read FVGA…ALSA, GGGI…ILGL, and IILG…MGAC. The disordered stretch occupies residues 227–283; sequence PGLQDLQQEPKEPQEPQELQKQQEPQEPQELQKQQETQETQETQELQKTQEPPSYEK. Residues 242–283 are compositionally biased toward low complexity; it reads PQELQKQQEPQEPQELQKQQETQETQETQELQKTQEPPSYEK.

The protein belongs to the IFI6/IFI27 family. Homooligomer. Interacts with BAK1. Interacts with BAX. Interacts with adenine nucleotide translocase.

The protein localises to the mitochondrion inner membrane. Functions in the intrinsic apoptotic signaling pathway and may have an interferon-induced antiviral activity. This Mus musculus (Mouse) protein is Interferon alpha-inducible protein 27-like protein 2B.